Reading from the N-terminus, the 513-residue chain is Maturase K (513 aa).

The protein belongs to the intron maturase 2 family. MatK subfamily.

It is found in the plastid. It localises to the chloroplast. Functionally, usually encoded in the trnK tRNA gene intron. Probably assists in splicing its own and other chloroplast group II introns. This chain is Maturase K, found in Keckiella cordifolia (Heart-leafed penstemon).